The chain runs to 852 residues: MEVSQEELTPLMRQYLRVKEQYKDAIVFFRLGDFYEMFGEDAVIASKILGITLTSRDKSKEKAIPMCGIPYFSADSYIEKLLREGYKVAICEQIGDPKTSKGIVEREVIKVLTPGTYLPEGVRENIYIMSIYPSKGKIGIALADITTGQFFLYETDKNITDEIERFEPKEILIPASFEDSLKFEISSYNKTFIEDWKFDYLLAYKTLLEHFKVASLKSYGAEEFSNAISAGGALLKYLEENKQQTEFKGIKILNLSEFMLLDASTKKNLEIFVSLDGSREGSLIWVLDETLTPMGARFLKNTLSCPLLNISEIEKRFDGIEAFCGDYLLREKLEKILKDFPDIERIALKIKGKSINPKELNSLKNALKRIPELREVLRNKTEILNSLYNSLYELNELVTKIENALTENPPPVITEGGIFRDGYNSTIDELRALRTESKKYILNMEAEERKKTGINSLKIGYNRVFGYYIEVTKPNLHLVPSHYIRKQTLANAERFITEELKELELKIMSAEEKLKILEQELFIELVNSILPFTDKILNNGETIGFIDFLLSLAKVASKYNYVRPEINEEDIIEIKDGRHPVIERLIQLGKLYEGRFIPNDLLIGPADQRIIILTGPNMAGKSTYMRQNALIVLMAQIGSFVPAKYAKIGIVDRIFTRIGASDYLAKGQSTFMVEMIETANILNNATPKSFIILDEVGRGTSTFDGISIAWSVVEYIAEKIKARTLFATHYHELTDLAFNLDCIKNFTVVVKEWGDEIIFLRKIQEGGADKSYGIQVARLAGLPLEILNRAREILHRLEKKEFQVFPIRARQLDLFFQGDPIKAELSKIDIDSLNPQKALKKLKELKEMLKND.

Position 615–622 (615–622 (GPNMAGKS)) interacts with ATP.

This sequence belongs to the DNA mismatch repair MutS family.

This protein is involved in the repair of mismatches in DNA. It is possible that it carries out the mismatch recognition step. This protein has a weak ATPase activity. The protein is DNA mismatch repair protein MutS of Thermodesulfovibrio yellowstonii (strain ATCC 51303 / DSM 11347 / YP87).